A 177-amino-acid chain; its full sequence is MSRVGKMPVAIPNGVDVTITEEQISVKGSGGTLSVAQNRLVKIVNKDGKLSFEPADESREANAMSGTIRQLVNNMVVGVSKGFEKKLNLIGVGYKAQASGAKLNLAVGYSHPVNFDMPAGITVATPTPTEIVIKGADRQRVGQLAAEIRAVRPPEPYKGKGIRYSDEKVTIKETKKK.

The protein belongs to the universal ribosomal protein uL6 family. Part of the 50S ribosomal subunit.

Its function is as follows. This protein binds to the 23S rRNA, and is important in its secondary structure. It is located near the subunit interface in the base of the L7/L12 stalk, and near the tRNA binding site of the peptidyltransferase center. The chain is Large ribosomal subunit protein uL6 from Paracidovorax citrulli (strain AAC00-1) (Acidovorax citrulli).